A 163-amino-acid chain; its full sequence is Crossover junction endodeoxyribonuclease RuvC (163 aa).

Active-site residues include Asp4, Glu65, and Asp138. Mg(2+)-binding residues include Asp4, Glu65, and Asp138.

The protein belongs to the RuvC family. Homodimer which binds Holliday junction (HJ) DNA. The HJ becomes 2-fold symmetrical on binding to RuvC with unstacked arms; it has a different conformation from HJ DNA in complex with RuvA. In the full resolvosome a probable DNA-RuvA(4)-RuvB(12)-RuvC(2) complex forms which resolves the HJ. Requires Mg(2+) as cofactor.

It is found in the cytoplasm. It catalyses the reaction Endonucleolytic cleavage at a junction such as a reciprocal single-stranded crossover between two homologous DNA duplexes (Holliday junction).. In terms of biological role, the RuvA-RuvB-RuvC complex processes Holliday junction (HJ) DNA during genetic recombination and DNA repair. Endonuclease that resolves HJ intermediates. Cleaves cruciform DNA by making single-stranded nicks across the HJ at symmetrical positions within the homologous arms, yielding a 5'-phosphate and a 3'-hydroxyl group; requires a central core of homology in the junction. The consensus cleavage sequence is 5'-(A/T)TT(C/G)-3'. Cleavage occurs on the 3'-side of the TT dinucleotide at the point of strand exchange. HJ branch migration catalyzed by RuvA-RuvB allows RuvC to scan DNA until it finds its consensus sequence, where it cleaves and resolves the cruciform DNA. In Corynebacterium jeikeium (strain K411), this protein is Crossover junction endodeoxyribonuclease RuvC.